We begin with the raw amino-acid sequence, 227 residues long: Leucyl/phenylalanyl-tRNA--protein transferase (227 aa).

This sequence belongs to the L/F-transferase family.

It localises to the cytoplasm. The catalysed reaction is N-terminal L-lysyl-[protein] + L-leucyl-tRNA(Leu) = N-terminal L-leucyl-L-lysyl-[protein] + tRNA(Leu) + H(+). It catalyses the reaction N-terminal L-arginyl-[protein] + L-leucyl-tRNA(Leu) = N-terminal L-leucyl-L-arginyl-[protein] + tRNA(Leu) + H(+). The enzyme catalyses L-phenylalanyl-tRNA(Phe) + an N-terminal L-alpha-aminoacyl-[protein] = an N-terminal L-phenylalanyl-L-alpha-aminoacyl-[protein] + tRNA(Phe). Its function is as follows. Functions in the N-end rule pathway of protein degradation where it conjugates Leu, Phe and, less efficiently, Met from aminoacyl-tRNAs to the N-termini of proteins containing an N-terminal arginine or lysine. The chain is Leucyl/phenylalanyl-tRNA--protein transferase from Desulfotalea psychrophila (strain LSv54 / DSM 12343).